The chain runs to 139 residues: Maximins 4/H3 type 6 (139 aa).

An N-terminal signal peptide occupies residues 1–18 (MNFKYIVAVSFLIASAYA). Residues 19-43 (RSVQNDEQSLSQRDVLEEESLREIR) constitute a propeptide that is removed on maturation. N70 carries the asparagine amide modification. Residues 74–118 (TAEDHEVMKRLEAVMRDLDSLDHPEEASERETRGFNQDEIAKEKR) constitute a propeptide that is removed on maturation. At I138 the chain carries Isoleucine amide.

It belongs to the bombinin family. As to expression, expressed by the skin glands.

The protein localises to the secreted. Maximin-4 shows antibacterial activity against both Gram-positive and Gram-negative bacteria. It also shows antimicrobial activity against the fungus C.albicans, but not against A.flavus nor P.uticale. It has little hemolytic activity. It does not possess a significant cytotoxicity against tumor cell lines. It does not possess a significant anti-HIV activity. Its function is as follows. Maximin-H3 shows antibacterial activity against both Gram-positive and Gram-negative bacteria. It also shows antimicrobial activity against the fungus C.albicans. Shows strong hemolytic activity. The polypeptide is Maximins 4/H3 type 6 (Bombina maxima (Giant fire-bellied toad)).